The following is a 428-amino-acid chain: MSDVLSQYKGCSVRDLPTPNFVINEEKFDKNCTTMLNNVEKLSQECGVPIKFRAHVKTHKTAKGTLKQLGHGLPLAKRTTRAILVSTLKEAEELLNYQDRQCSDYIDDITYSLPCCVPEFIPLLSNLSRRVNNFQVFVDNIEHLENLKNFGRPASGKKWSVFIKVDMGTKRAGLAFDSPEFLSLLKKLTSSEIKEVIEPYGFYAHAGHSYSSTSINDTQNLLMEEVKAVNSAAKVLCSVDPQFDPSKLTLSVGATPTSNSLKLDNKSTLVKFITTQLVSTLEIHCGNYCMYDLQQVATGCVQDHELSGFVLGTVLSSYPSRGELLSNTGVMCLTREASSIKGFGICADLEHVLKSESFSREWYVARVSQEHGILRPIRNWNETTPLKLGSKIAVLPQHACITMGQFPYYFVVNSEGIVNDVWLPFQKW.

Residue Lys57 is modified to N6-(pyridoxal phosphate)lysine. Tyr203, Tyr210, Thr255, Gly286, and Asn287 together coordinate pyridoxal 5'-phosphate. Positions 398 and 400 each coordinate Zn(2+).

It belongs to the DSD1 family. In terms of assembly, homodimer. Requires pyridoxal 5'-phosphate as cofactor. Zn(2+) serves as cofactor.

The catalysed reaction is D-serine = pyruvate + NH4(+). Its activity is regulated as follows. Sodium cyanoborohydride, N-ethylmaleimide, hydroxylamine, phenyhydrazin and EDTA are inhibitors of the catalytic activity. Its function is as follows. Catalyzes the conversion of D-serine to pyruvate and ammonia. May play a role in D-serine detoxification. The chain is D-serine dehydratase from Saccharomyces cerevisiae (strain ATCC 204508 / S288c) (Baker's yeast).